The primary structure comprises 357 residues: 3-isopropylmalate dehydrogenase (357 aa).

Residues Arg97, Arg107, Arg135, and Asp224 each coordinate substrate. The Mg(2+) site is built by Asp224, Asp248, and Asp252. Position 282-294 (282-294 (GSAPDIAGQDLAN)) interacts with NAD(+).

The protein belongs to the isocitrate and isopropylmalate dehydrogenases family. LeuB type 1 subfamily. As to quaternary structure, homodimer. The cofactor is Mg(2+). Requires Mn(2+) as cofactor.

Its subcellular location is the cytoplasm. It catalyses the reaction (2R,3S)-3-isopropylmalate + NAD(+) = 4-methyl-2-oxopentanoate + CO2 + NADH. The protein operates within amino-acid biosynthesis; L-leucine biosynthesis; L-leucine from 3-methyl-2-oxobutanoate: step 3/4. In terms of biological role, catalyzes the oxidation of 3-carboxy-2-hydroxy-4-methylpentanoate (3-isopropylmalate) to 3-carboxy-4-methyl-2-oxopentanoate. The product decarboxylates to 4-methyl-2 oxopentanoate. In Prochlorococcus marinus (strain MIT 9313), this protein is 3-isopropylmalate dehydrogenase.